Reading from the N-terminus, the 81-residue chain is Photosystem I iron-sulfur center (81 aa).

4Fe-4S ferredoxin-type domains lie at 2 to 31 (AHTVKIYDNCIGCTQCVRACPLDVLEMVPW) and 39 to 68 (MASAPRTEDCVGCKRCETACPTDFLSIRVY). Cys11, Cys14, Cys17, Cys21, Cys48, Cys51, Cys54, and Cys58 together coordinate [4Fe-4S] cluster.

The eukaryotic PSI reaction center is composed of at least 11 subunits. [4Fe-4S] cluster is required as a cofactor.

The protein resides in the plastid. The protein localises to the chloroplast thylakoid membrane. It catalyses the reaction reduced [plastocyanin] + hnu + oxidized [2Fe-2S]-[ferredoxin] = oxidized [plastocyanin] + reduced [2Fe-2S]-[ferredoxin]. In terms of biological role, apoprotein for the two 4Fe-4S centers FA and FB of photosystem I (PSI); essential for photochemical activity. FB is the terminal electron acceptor of PSI, donating electrons to ferredoxin. The C-terminus interacts with PsaA/B/D and helps assemble the protein into the PSI complex. Required for binding of PsaD and PsaE to PSI. PSI is a plastocyanin/cytochrome c6-ferredoxin oxidoreductase, converting photonic excitation into a charge separation, which transfers an electron from the donor P700 chlorophyll pair to the spectroscopically characterized acceptors A0, A1, FX, FA and FB in turn. This Cyanidioschyzon merolae (strain NIES-3377 / 10D) (Unicellular red alga) protein is Photosystem I iron-sulfur center.